Consider the following 1059-residue polypeptide: MIKISDEKTWQSSRDSVYEVGDSYSGQNANRPLVATNCSEYAVAHANCQLRPVRRFAEVSLLPDILETMRNLGLNRLLRLQSYTWPHLAGGSGHGAMIVGSPASGRTFAYIPPVCHAVSRALMDFTGQCEDVEHDISQPDRYGPIALILVPDLRRVHQVSAMCLALLRKAHKNDSVTLALNVSSTKSSQFFLKLLNGVGCLVATPAQLVWFWQEAPGLMRFPCLQFLVYDDVDLMSREQLQDVQQVLQEILPLSHSPQVVMVSKSYCHTLMSKLRAVNDKPALVFGDILEAALYGGTRIRISIMRSEAKANAVVQMLQQCSPEEFRTVIFCSDDGDMQCLVAALEVQHYSCLPYYQTADLEVRQQVHSWQARSNGVILLCTDNCPELDIRDAHTIIHHSMSHSWSKFKLRHLKISDNLCNMVKPTASIVKKPLYSLVLLDDNNHRQLPRLVDFLQLHQKVDHRLVEVAKRIRQELGKARNDQHQLCDQILVLGKCYDPVCESRHRLSHIDRRPDYLPASGDVKVQLVKVYSPTHFCVRLLEHLPPKGTWRMMEYSAVQEFRMQLTQIKEPRRYWPPVAGAICMYHTTFTKERVRVLKVAAIKNTNIVQSDLTVKLQALDVDTRIFSTNCGKLFECPEALQQEAPLACDLRLPGWVPYFGERSWTEENIRNVNLILTQLPKDHFLQAKILFVAAGTLFVQDLVAIMYADQFKAHVRHLSLARRLVEATLVKRSENAAEMIREFFAEVIIEDDIDENVQDSKEKANSKPHEKMKGKMTDQPAKLQSQPPLSGRCLRLANMAHESVKENQLHQELQERRYETPEIPHQSNESDIPQSNEDRFSQLYECIMNCASLQLEDESKPAKHPDHVLSESVEFHKIMTNEDATPDHTQEKTALLLLPNNVARPSVTYYQTMTTLEFQVFLPEDDHDYKALLLGAQLFFRAISKSSDLILQFIMTLRFPYSSMSHNIRGRTVYISVKKLLALIDPLAFREYRFLKPNHDLFDKVDKQLQETQNRLVRFLEDMNYVKRNFEGQEKRETSEDEEVNVEGIERPDCHKIWDL.

The short motif at 54–82 is the Q motif element; the sequence is RRFAEVSLLPDILETMRNLGLNRLLRLQS. In terms of domain architecture, Helicase ATP-binding spans 87 to 284; the sequence is HLAGGSGHGA…RAVNDKPALV (198 aa). 100 to 107 contacts ATP; sequence GSPASGRT. Residues 230–233 carry the DEAD box motif; that stretch reads DDVD. One can recognise a Tudor domain in the interval 575–639; the sequence is PPVAGAICMY…GKLFECPEAL (65 aa). The tract at residues 756–787 is disordered; sequence VQDSKEKANSKPHEKMKGKMTDQPAKLQSQPP. Positions 757-775 are enriched in basic and acidic residues; that stretch reads QDSKEKANSKPHEKMKGKM.

It is found in the cytoplasm. The catalysed reaction is ATP + H2O = ADP + phosphate + H(+). Functionally, involved in primary piRNA biogenesis in germline cells. In Drosophila melanogaster (Fruit fly), this protein is Putative ATP-dependent RNA helicase BoYb (BoYb).